Reading from the N-terminus, the 161-residue chain is Small ribosomal subunit protein uS9 (161 aa).

This sequence belongs to the universal ribosomal protein uS9 family.

This Rickettsia canadensis (strain McKiel) protein is Small ribosomal subunit protein uS9.